We begin with the raw amino-acid sequence, 96 residues long: MAIRPLHDRVIIKREEVETLSAGGIVLTGSAATKSTRAKVLAVGKGRVLENGTVQPLDVKVGDTVIFNDGYGVKAEKIDGEEVLIISENDILAIVE.

It belongs to the GroES chaperonin family. As to quaternary structure, heptamer of 7 subunits arranged in a ring. Interacts with the chaperonin GroEL.

The protein localises to the cytoplasm. Together with the chaperonin GroEL, plays an essential role in assisting protein folding. The GroEL-GroES system forms a nano-cage that allows encapsulation of the non-native substrate proteins and provides a physical environment optimized to promote and accelerate protein folding. GroES binds to the apical surface of the GroEL ring, thereby capping the opening of the GroEL channel. This chain is Co-chaperonin GroES, found in Actinobacillus succinogenes (strain ATCC 55618 / DSM 22257 / CCUG 43843 / 130Z).